The primary structure comprises 159 residues: 6,7-dimethyl-8-ribityllumazine synthase (159 aa).

5-amino-6-(D-ribitylamino)uracil contacts are provided by residues Phe-22, 57 to 59, and 81 to 83; these read AVE and AVI. 86–87 is a (2S)-2-hydroxy-3-oxobutyl phosphate binding site; that stretch reads GT. Residue His-89 is the Proton donor of the active site. Phe-114 contacts 5-amino-6-(D-ribitylamino)uracil. Position 128 (Arg-128) interacts with (2S)-2-hydroxy-3-oxobutyl phosphate.

This sequence belongs to the DMRL synthase family. Forms an icosahedral capsid composed of 60 subunits, arranged as a dodecamer of pentamers.

The catalysed reaction is (2S)-2-hydroxy-3-oxobutyl phosphate + 5-amino-6-(D-ribitylamino)uracil = 6,7-dimethyl-8-(1-D-ribityl)lumazine + phosphate + 2 H2O + H(+). Its pathway is cofactor biosynthesis; riboflavin biosynthesis; riboflavin from 2-hydroxy-3-oxobutyl phosphate and 5-amino-6-(D-ribitylamino)uracil: step 1/2. Its function is as follows. Catalyzes the formation of 6,7-dimethyl-8-ribityllumazine by condensation of 5-amino-6-(D-ribitylamino)uracil with 3,4-dihydroxy-2-butanone 4-phosphate. This is the penultimate step in the biosynthesis of riboflavin. The sequence is that of 6,7-dimethyl-8-ribityllumazine synthase from Shewanella denitrificans (strain OS217 / ATCC BAA-1090 / DSM 15013).